Consider the following 209-residue polypeptide: Ribosomal RNA large subunit methyltransferase E (209 aa).

S-adenosyl-L-methionine is bound by residues G63, W65, D83, D99, and D124. K164 serves as the catalytic Proton acceptor.

It belongs to the class I-like SAM-binding methyltransferase superfamily. RNA methyltransferase RlmE family.

Its subcellular location is the cytoplasm. The enzyme catalyses uridine(2552) in 23S rRNA + S-adenosyl-L-methionine = 2'-O-methyluridine(2552) in 23S rRNA + S-adenosyl-L-homocysteine + H(+). In terms of biological role, specifically methylates the uridine in position 2552 of 23S rRNA at the 2'-O position of the ribose in the fully assembled 50S ribosomal subunit. This chain is Ribosomal RNA large subunit methyltransferase E, found in Yersinia pseudotuberculosis serotype O:1b (strain IP 31758).